Reading from the N-terminus, the 158-residue chain is NAD(P)H-quinone oxidoreductase subunit J, chloroplastic (158 aa).

The protein belongs to the complex I 30 kDa subunit family. In terms of assembly, NDH is composed of at least 16 different subunits, 5 of which are encoded in the nucleus.

The protein localises to the plastid. It localises to the chloroplast thylakoid membrane. It catalyses the reaction a plastoquinone + NADH + (n+1) H(+)(in) = a plastoquinol + NAD(+) + n H(+)(out). It carries out the reaction a plastoquinone + NADPH + (n+1) H(+)(in) = a plastoquinol + NADP(+) + n H(+)(out). NDH shuttles electrons from NAD(P)H:plastoquinone, via FMN and iron-sulfur (Fe-S) centers, to quinones in the photosynthetic chain and possibly in a chloroplast respiratory chain. The immediate electron acceptor for the enzyme in this species is believed to be plastoquinone. Couples the redox reaction to proton translocation, and thus conserves the redox energy in a proton gradient. This Arabis hirsuta (Hairy rock-cress) protein is NAD(P)H-quinone oxidoreductase subunit J, chloroplastic.